The sequence spans 257 residues: Phycoerythrobilin:ferredoxin oxidoreductase (257 aa).

Belongs to the HY2 family.

The enzyme catalyses (3Z)-phycoerythrobilin + oxidized 2[4Fe-4S]-[ferredoxin] = 15,16-dihydrobiliverdin + reduced 2[4Fe-4S]-[ferredoxin] + 2 H(+). Its function is as follows. Catalyzes the two-electron reduction of the C2 and C3(1) diene system of 15,16-dihydrobiliverdin. The sequence is that of Phycoerythrobilin:ferredoxin oxidoreductase from Prochlorococcus marinus (strain MIT 9211).